Here is a 485-residue protein sequence, read N- to C-terminus: U4/U6 small nuclear ribonucleoprotein Prp31 homolog (485 aa).

Disordered regions lie at residues Met-1–Val-36 and Ile-329–Arg-361. Positions Asp-11–Val-36 are enriched in acidic residues. In terms of domain architecture, Nop spans Ile-216–Glu-334. Pro residues predominate over residues Glu-334–Asp-348. Basic residues predominate over residues Lys-352 to Arg-361. The Nuclear localization signal signature appears at Lys-352–Glu-365.

It belongs to the PRP31 family. In terms of assembly, component of the U4/U6-U5 tri-snRNP complex composed of the U4, U6 and U5 snRNAs and pre-mRNA-splicing factors. Interacts with STA1 and SOP1.

It localises to the nucleus. It is found in the cajal body. Its function is as follows. Involved in pre-mRNA splicing. Required for the assembly of the U4/U5/U6 tri-snRNP complex, one of the building blocks of the spliceosome. Functions in association with STA1 and ZOP1 in spliceosome dynamics and pre-mRNA splicing. Required for transcriptional regulation and pre-mRNA splicing of cold-responsive genes, such as LTI78/RD29A, KIN2/COR6.6 or COR15A, especially under cold stress. May play a role in stress response. Involved in transcriptional gene silencing of endogenous transposable elements, independently of the RNA-directed DNA methylation (RdDM) pathway. Seems not to participate in the small RNA biogenesis of the RdDM pathway. The protein is U4/U6 small nuclear ribonucleoprotein Prp31 homolog of Arabidopsis thaliana (Mouse-ear cress).